The chain runs to 71 residues: Antitoxin VapB26 (71 aa).

Antitoxin component of a type II toxin-antitoxin (TA) system. Upon expression in M.smegmatis neutralizes the effect of cognate toxin VapC26. This chain is Antitoxin VapB26 (vapB26), found in Mycobacterium tuberculosis (strain ATCC 25618 / H37Rv).